We begin with the raw amino-acid sequence, 232 residues long: Aspartate racemase (232 aa).

49 to 51 (DRT) provides a ligand contact to substrate. Cysteine 84 functions as the Proton donor/acceptor in the catalytic mechanism. Substrate is bound by residues 85 to 87 (NTA) and lysine 166. Cysteine 195 (proton donor/acceptor) is an active-site residue.

Belongs to the aspartate/glutamate racemases family.

The catalysed reaction is L-aspartate = D-aspartate. The sequence is that of Aspartate racemase from Thermococcus sp. (strain KS-8).